Consider the following 436-residue polypeptide: Nicotinate phosphoribosyltransferase (436 aa).

Phosphohistidine; by autocatalysis is present on His-231.

This sequence belongs to the NAPRTase family. In terms of processing, transiently phosphorylated on a His residue during the reaction cycle. Phosphorylation strongly increases the affinity for substrates and increases the rate of nicotinate D-ribonucleotide production. Dephosphorylation regenerates the low-affinity form of the enzyme, leading to product release.

The enzyme catalyses nicotinate + 5-phospho-alpha-D-ribose 1-diphosphate + ATP + H2O = nicotinate beta-D-ribonucleotide + ADP + phosphate + diphosphate. It participates in cofactor biosynthesis; NAD(+) biosynthesis; nicotinate D-ribonucleotide from nicotinate: step 1/1. In terms of biological role, catalyzes the synthesis of beta-nicotinate D-ribonucleotide from nicotinate and 5-phospho-D-ribose 1-phosphate at the expense of ATP. The protein is Nicotinate phosphoribosyltransferase of Vibrio campbellii (strain ATCC BAA-1116).